Reading from the N-terminus, the 244-residue chain is Phosphoadenosine 5'-phosphosulfate reductase (244 aa).

The active-site Nucleophile; cysteine thiosulfonate intermediate is C239.

This sequence belongs to the PAPS reductase family. CysH subfamily.

The protein localises to the cytoplasm. It carries out the reaction [thioredoxin]-disulfide + sulfite + adenosine 3',5'-bisphosphate + 2 H(+) = [thioredoxin]-dithiol + 3'-phosphoadenylyl sulfate. Its pathway is sulfur metabolism; hydrogen sulfide biosynthesis; sulfite from sulfate: step 3/3. In terms of biological role, catalyzes the formation of sulfite from phosphoadenosine 5'-phosphosulfate (PAPS) using thioredoxin as an electron donor. The chain is Phosphoadenosine 5'-phosphosulfate reductase from Salmonella dublin (strain CT_02021853).